Consider the following 397-residue polypeptide: Elongation factor Tu (397 aa).

The tr-type G domain occupies 10 to 206; the sequence is KPHVNIGTIG…AVDSYIPTPE (197 aa). A G1 region spans residues 19–26; it reads GHVDHGKT. 19 to 26 serves as a coordination point for GTP; sequence GHVDHGKT. Threonine 26 is a Mg(2+) binding site. The segment at 60–64 is G2; it reads GITIN. Residues 81-84 are G3; that stretch reads DCPG. Residues 81–85 and 136–139 each bind GTP; these read DCPGH and NKAD. The G4 stretch occupies residues 136-139; sequence NKAD. A G5 region spans residues 174 to 176; sequence SAL.

The protein belongs to the TRAFAC class translation factor GTPase superfamily. Classic translation factor GTPase family. EF-Tu/EF-1A subfamily. In terms of assembly, monomer.

It localises to the cytoplasm. The catalysed reaction is GTP + H2O = GDP + phosphate + H(+). In terms of biological role, GTP hydrolase that promotes the GTP-dependent binding of aminoacyl-tRNA to the A-site of ribosomes during protein biosynthesis. This chain is Elongation factor Tu, found in Clostridium beijerinckii (strain ATCC 51743 / NCIMB 8052) (Clostridium acetobutylicum).